Consider the following 319-residue polypeptide: tRNA (guanine-N(7)-)-methyltransferase (319 aa).

S-adenosyl-L-methionine is bound by residues E28, E51, and D75. Substrate-binding positions include D134 and 167-170; that span reads TKYE.

Belongs to the class I-like SAM-binding methyltransferase superfamily. TrmB family.

It catalyses the reaction guanosine(46) in tRNA + S-adenosyl-L-methionine = N(7)-methylguanosine(46) in tRNA + S-adenosyl-L-homocysteine. Its pathway is tRNA modification; N(7)-methylguanine-tRNA biosynthesis. Functionally, catalyzes the formation of N(7)-methylguanine at position 46 (m7G46) in tRNA. The sequence is that of tRNA (guanine-N(7)-)-methyltransferase from Coprothermobacter proteolyticus (strain ATCC 35245 / DSM 5265 / OCM 4 / BT).